We begin with the raw amino-acid sequence, 350 residues long: Outer membrane porin PhoE (350 aa).

Residues 1–21 (MKKSTLALVVMGVVASASVHA) form the signal peptide.

It belongs to the Gram-negative porin family. Homotrimer.

The protein localises to the cell outer membrane. Functionally, uptake of inorganic phosphate, phosphorylated compounds, and some other negatively charged solutes. The protein is Outer membrane porin PhoE (phoE) of Enterobacter cloacae.